Here is a 2672-residue protein sequence, read N- to C-terminus: eIF-2-alpha kinase activator GCN1 (2672 aa).

11 HEAT repeats span residues 5–42, 79–117, 174–211, 227–267, 329–366, 372–410, 509–549, 611–648, 706–745, 902–932, and 933–970; these read LNWE…QETL, NLEP…WINS, CIFQ…YSKL, QAAL…NPPS, FASS…KISN, EDLT…THYE, HGHA…NSSI, KYVT…IFNI, IQPN…EEGV, QDYL…IDSI, and SLTY…EEDE. The stretch at 975-994 is one HEAT 12; degenerate repeat; it reads LLLAMEIISVHAEAFEDPSI. Residues 995–1030 form an HEAT 13; degenerate repeat; sequence PRISIVEVLLSLLSLPSKAKIAKDCFNALCQSISVA. HEAT repeat units lie at residues 1031 to 1067, 1099 to 1138, 1185 to 1224, 1243 to 1281, 1284 to 1321, 1363 to 1401, 1405 to 1442, 1444 to 1480, 1484 to 1521, 1523 to 1559, 1561 to 1598, 1603 to 1640, 1641 to 1679, 1681 to 1717, 1721 to 1758, 1760 to 1796, 1825 to 1862, 1863 to 1903, 1905 to 1942, 1947 to 1984, 1985 to 2024, 2026 to 2055, 2057 to 2095, 2097 to 2134, 2138 to 2175, 2206 to 2243, 2250 to 2286, 2290 to 2328, 2347 to 2384, 2392 to 2429, 2450 to 2487, and 2506 to 2546; these read PNQE…LEPF, VVND…FTSE, STVA…REPI, QNSK…HLQQ, ARIH…QFKQ, LSEF…SLGK, PYVI…HTTG, GVKK…LDPT, ASLS…VIRN, EIQK…HYID, PSLA…LVDT, PYLQ…RLGE, EQFP…GLGL, KLDE…CFGS, PYIN…NYAT, AVDL…QVTG, DRRD…NTPR, AVKE…RVGG, ALSQ…SAST, QFQS…VVGK, TAVD…VIFP, LIPT…SALY, RLSI…SVND, EGLH…KTVL, VYIP…KVDK, RGPN…KTPA, VSVI…KIPM, PFIP…HQPR, GVKT…EEML, VAYA…ETGK, GLID…LEGE, and ENIN…FKFD. The interval 1330–1641 is EF3-like region; sequence LMEKLLNPTV…GALVERLGEE (312 aa). The interval 2207 to 2356 is RWDBD region; that stretch reads GPNCVLPIFL…GVKTAMLKAL (150 aa).

It belongs to the GCN1 family. As to quaternary structure, interacts (via N- and C-terminus) with GCN2 (via N-terminal RWD domain); this interaction stimulates GCN2 kinase activity in a GCN20-dependent manner in response to amino acid starvation. Interacts (via C-terminus) with GCN20 (via N-terminus); this interaction stimulates GCN2 kinase activity in response to amino acid starvation. The GCN1-GCN20 complex interacts with GCN2 on translating ribosomes in amino acid-starved cells; GCN1 may bind near the ribosomal A-site and promotes the transfer of uncharged tRNAs from the A-site to the tRNA-binding domain in GCN2 for its subsequent kinase activation, and hence allowing GCN4 translational activation and derepression of amino acid biosynthetic genes. Interacts (via C-terminus) with YIH1 (via N-terminus); this interaction reduces the GCN1-GCN20 complex formation and prevents the interaction of GCN1 with GCN2 and GCN2 kinase activation in amino acid-starved cells. Interacts with GIR2; this interaction prevents the interaction of GCN1 with GCN2 and GCN2 kinase activation in amino acid-starved cells. Interacts (via middle region) with RPS10A and RPS10B; these interactions are direct and promote GCN2 kinase activation. Associates (via N-terminus) with ribosomes; this association is stimulated in a ATP- and GCN20-dependent manner and is necessary to activate GCN2 kinase activity.

The protein resides in the cytoplasm. Its function is as follows. Ribosome collision sensor that activates a translation quality control pathway when a ribosome has stalled during translation. Directly binds to the ribosome and acts as a sentinel for colliding ribosomes. GCN1 also acts as a positive activator of the integrated stress response (ISR) by mediating activation of GCN2 in response to low amino acid, carbon, or purine availability. Component of the GCN1-GCN20 complex that forms a complex with GCN2 on translating ribosomes: during this process, GCN1 acts as a chaperone to facilitate delivery of uncharged tRNAs that enter the A-site of ribosomes to the tRNA-binding domain of GCN2, and hence stimulating GCN2 kinase activity, leading to phosphorylation of eukaryotic translation initiation factor 2 (eIF-2-alpha/SUI2). eIF-2-alpha/SUI2 phosphorylation converts eIF-2-alpha/SUI2 into a global protein synthesis inhibitor, leading to a global attenuation of cap-dependent translation, and thus to a reduced overall utilization of amino acids, while concomitantly initiating the preferential translation of ISR-specific mRNAs, such as the transcriptional activator GCN4, and hence allowing GCN4-mediated reprogramming of amino acid biosynthetic gene expression to alleviate nutrient depletion. The sequence is that of eIF-2-alpha kinase activator GCN1 from Saccharomyces cerevisiae (strain ATCC 204508 / S288c) (Baker's yeast).